A 300-amino-acid chain; its full sequence is UDP-N-acetylenolpyruvoylglucosamine reductase (300 aa).

The region spanning 27–192 (KVGGPADYLA…ISAKFALKPG (166 aa)) is the FAD-binding PCMH-type domain. The active site involves R171. The active-site Proton donor is S221. The active site involves E291.

It belongs to the MurB family. It depends on FAD as a cofactor.

Its subcellular location is the cytoplasm. The enzyme catalyses UDP-N-acetyl-alpha-D-muramate + NADP(+) = UDP-N-acetyl-3-O-(1-carboxyvinyl)-alpha-D-glucosamine + NADPH + H(+). The protein operates within cell wall biogenesis; peptidoglycan biosynthesis. Its function is as follows. Cell wall formation. The chain is UDP-N-acetylenolpyruvoylglucosamine reductase from Streptococcus agalactiae serotype Ia (strain ATCC 27591 / A909 / CDC SS700).